The sequence spans 215 residues: Glutathione S-transferase F10 (215 aa).

Residues V2 to G81 enclose the GST N-terminal domain. Glutathione contacts are provided by residues A11 to S12, Q39 to R40, K52 to I53, and E65 to S66. In terms of domain architecture, GST C-terminal spans T88–V215.

The protein belongs to the GST superfamily. Phi family. In terms of assembly, interacts with BAK1. Expressed in roots, stems, floral buds, mature flowers and leaves.

It is found in the cytoplasm. Its subcellular location is the cytosol. It carries out the reaction RX + glutathione = an S-substituted glutathione + a halide anion + H(+). Its function is as follows. In vitro, possesses glutathione S-transferase activity toward 1-chloro-2,4-dinitrobenzene (CDNB) and benzyl isothiocyanate (BITC). May be involved in the conjugation of reduced glutathione to a wide number of exogenous and endogenous hydrophobic electrophiles and have a detoxification role against certain herbicides. In Arabidopsis thaliana (Mouse-ear cress), this protein is Glutathione S-transferase F10.